The primary structure comprises 383 residues: Histidine decarboxylase (383 aa).

Histidine 120 lines the substrate pocket. N6-(pyridoxal phosphate)lysine is present on lysine 233.

It belongs to the group II decarboxylase family. In terms of assembly, homotetramer. Pyridoxal 5'-phosphate serves as cofactor.

It catalyses the reaction L-histidine + H(+) = histamine + CO2. This chain is Histidine decarboxylase, found in Acinetobacter baumannii (strain AB307-0294).